The primary structure comprises 270 residues: LTEVVKAQSFTKAAENLYTSQPSISRDIKRLENDYDVKVFEFKHSKMTLTSDGEKLYQYVLQRNYLEQALRQDLKMQNNAVAGDLKLGSSFTFGEYRLSRQLTKLAQMYPELHIHVHLDNSETIVEQIKNNIVDVGIVEKKIQNNAIISTPIAQDEIVLIKKKSSSSNLETCFIREQGSGTRVYQENGLNQLSLNPYLVVINNTSLIKSMVHAGNGFSIVSKSTLTSEDLEQLEVINLDIERFFYLILHKDKYIDEKMKRVISVLKQNVE.

Residues 1–50 enclose the HTH lysR-type domain; the sequence is LTEVVKAQSFTKAAENLYTSQPSISRDIKRLENDYDVKVFEFKHSKMTLT. Positions 10-29 form a DNA-binding region, H-T-H motif; that stretch reads FTKAAENLYTSQPSISRDIK.

The protein belongs to the LysR transcriptional regulatory family.

This is an uncharacterized protein from Staphylococcus xylosus.